A 429-amino-acid polypeptide reads, in one-letter code: Tubby-like F-box protein 5 (429 aa).

Residues 53–108 form the F-box domain; that stretch reads TRWANLPAALLRDVMKKLDESESTWPARKQVVACAGVCKTWRLMCKDIVKSPEFSG. Residues 360-385 form a disordered region; that stretch reads QPGSGSDGGALATRPSLSPQQPEQSN. The span at 374–383 shows a compositional bias: polar residues; that stretch reads PSLSPQQPEQ.

Belongs to the TUB family. As to expression, mostly expressed in roots, flowers and siliques.

This is Tubby-like F-box protein 5 from Arabidopsis thaliana (Mouse-ear cress).